We begin with the raw amino-acid sequence, 147 residues long: Large ribosomal subunit protein bL9 (147 aa).

The segment at 40–60 is disordered; sequence TTGNLKQHEAHERKAAEEAKQ. Basic and acidic residues predominate over residues 45-59; sequence KQHEAHERKAAEEAK.

This sequence belongs to the bacterial ribosomal protein bL9 family.

Binds to the 23S rRNA. The chain is Large ribosomal subunit protein bL9 from Exiguobacterium sibiricum (strain DSM 17290 / CCUG 55495 / CIP 109462 / JCM 13490 / 255-15).